The primary structure comprises 1095 residues: Solute carrier family 12 member 1 (1095 aa).

Topologically, residues 1 to 173 (MSVSIPSNSV…EEDMTGVVKF (173 aa)) are cytoplasmic. Residues 16 to 19 (RFQV) carry the RFXV motif motif. Positions 29 to 49 (AAAVGDSADPPHYEETSFGDE) are disordered. Residues Ser57 and Ser87 each carry the phosphoserine modification. Phosphothreonine is present on residues Thr91, Thr96, Thr101, and Thr114. Residue Ser116 is modified to Phosphoserine. Ser126 carries the phosphoserine; by AMPK modification. Position 144 is a phosphoserine (Ser144). The helical transmembrane segment at 174–194 (GWVKGVLVRCMLNIWGVMLFI) threads the bilayer. The Extracellular segment spans residues 195–197 (RLS). A helical membrane pass occupies residues 198 to 218 (WIVGEAGIGLGVLIILLSTMV). Residues 219-255 (TSITGLSTSAIATNGFVRGGGAYYLISRSLGPEFGGS) lie on the Cytoplasmic side of the membrane. A helical membrane pass occupies residues 256-276 (IGLIFAFANAVAVAMYVVGFA). Residues 277–298 (ETVVDLLKESDSMMVDPTNDIR) are Extracellular-facing. A helical transmembrane segment spans residues 299-319 (IIGSITVVILLGISVAGMEWE). Residues 320–323 (AKAQ) lie on the Cytoplasmic side of the membrane. A helical transmembrane segment spans residues 324–344 (VILLVILLIAIANFFIGTVIP). At 345–375 (SNNEKKSRGFFNYQASIFAENFGPSFTKGEG) the chain is on the extracellular side. The chain crosses the membrane as a helical span at residues 376 to 396 (FFSVFAIFFPAATGILAGANI). The Cytoplasmic portion of the chain corresponds to 397–413 (SGDLEDPQDAIPRGTML). The chain crosses the membrane as a helical span at residues 414-434 (AIFITTVAYIGVAICVAACVV). At 435-546 (RDATGSMNDT…NNEPLRGYFL (112 aa)) the chain is on the extracellular side. 2 N-linked (GlcNAc...) asparagine glycosylation sites follow: Asn442 and Asn452. 2 helical membrane-spanning segments follow: residues 547–567 (TFVI…APII) and 568–588 (SNFF…ASYA). Residues 589-605 (KSPGWRPAYGIYNMWVS) lie on the Extracellular side of the membrane. Residues 606-626 (LFGAILCCAVMFVINWWAAVI) form a helical membrane-spanning segment. At 627 to 1095 (TYVIELFLYI…NHKNVLTFYS (469 aa)) the chain is on the cytoplasmic side.

This sequence belongs to the SLC12A transporter family. When phosphorylated, interacts with PPP3CB. In terms of processing, phosphorylated at Ser-87, Thr-96 and Thr-101 by OXSR1/OSR1 and STK39/SPAK downstream of WNK kinases (WNK1, WNK2, WNK3 or WNK4), promoting its activity. Short-term cyclosporine administration increases SLC12A1 phosphorylation in kidney thick ascending limb, possibly through the inhibition of PPP3CB/calcineurin A beta phosphatase. As to expression, predominantly expressed in kidney (at protein level). In terms of tissue distribution, kidney-specific; most highly expressed in the outer stripe of outer medulla (at protein level). Kidney-specific; most highly expressed in the cortical thick ascending limb (at protein level). As to expression, kidney-specific; most highly expressed in the inner stripe of outer medulla (at protein level).

It is found in the apical cell membrane. It catalyses the reaction K(+)(out) + 2 chloride(out) + Na(+)(out) = K(+)(in) + 2 chloride(in) + Na(+)(in). Activated following phosphorylation by OXSR1/OSR1 and STK39/SPAK downstream of WNK kinases (WNK1, WNK2, WNK3 or WNK4). Its activity is regulated as follows. Inhibited by mercury dichloride and diuretic drug bumetaide. Inactive in isotonic conditions. Renal sodium, potassium and chloride ion cotransporter that mediates the transepithelial NaCl reabsorption in the thick ascending limb and plays an essential role in the urinary concentration and volume regulation. Electrically silent transporter system. Its function is as follows. High affinity, high capacity cotransporter for sodium, potassium and chloride ions, with a coupling ratio 1Na(+):1K(+):2Cl(-). In terms of biological role, high affinity, low capacity cotransporter for sodium, potassium and chloride ions, with a coupling ratio 1Na(+):1K(+):2Cl(-). Functionally, low affinity, low capacity cotransporter for sodium, potassium and chloride ions, with a coupling ratio 1Na(+):1K(+):2Cl(-). The chain is Solute carrier family 12 member 1 (Slc12a1) from Mus musculus (Mouse).